We begin with the raw amino-acid sequence, 363 residues long: Flagellar P-ring protein (363 aa).

The signal sequence occupies residues 1 to 20 (MKLKLILAVAMLAFSLPSQA).

The protein belongs to the FlgI family. The basal body constitutes a major portion of the flagellar organelle and consists of four rings (L,P,S, and M) mounted on a central rod.

It is found in the periplasm. Its subcellular location is the bacterial flagellum basal body. Assembles around the rod to form the L-ring and probably protects the motor/basal body from shearing forces during rotation. In Shewanella sp. (strain MR-4), this protein is Flagellar P-ring protein.